The chain runs to 400 residues: CCA-adding enzyme (400 aa).

Glycine 28 and arginine 31 together coordinate ATP. 2 residues coordinate CTP: glycine 28 and arginine 31. Mg(2+) is bound by residues aspartate 41 and aspartate 43. The ATP site is built by arginine 112, aspartate 155, arginine 158, arginine 161, and arginine 164. Residues arginine 112, aspartate 155, arginine 158, arginine 161, and arginine 164 each contribute to the CTP site.

The protein belongs to the tRNA nucleotidyltransferase/poly(A) polymerase family. Bacterial CCA-adding enzyme type 3 subfamily. In terms of assembly, homodimer. It depends on Mg(2+) as a cofactor.

It catalyses the reaction a tRNA precursor + 2 CTP + ATP = a tRNA with a 3' CCA end + 3 diphosphate. The catalysed reaction is a tRNA with a 3' CCA end + 2 CTP + ATP = a tRNA with a 3' CCACCA end + 3 diphosphate. Functionally, catalyzes the addition and repair of the essential 3'-terminal CCA sequence in tRNAs without using a nucleic acid template. Adds these three nucleotides in the order of C, C, and A to the tRNA nucleotide-73, using CTP and ATP as substrates and producing inorganic pyrophosphate. tRNA 3'-terminal CCA addition is required both for tRNA processing and repair. Also involved in tRNA surveillance by mediating tandem CCA addition to generate a CCACCA at the 3' terminus of unstable tRNAs. While stable tRNAs receive only 3'-terminal CCA, unstable tRNAs are marked with CCACCA and rapidly degraded. In Oceanobacillus iheyensis (strain DSM 14371 / CIP 107618 / JCM 11309 / KCTC 3954 / HTE831), this protein is CCA-adding enzyme.